Reading from the N-terminus, the 744-residue chain is Cell surface receptor daf-4 (744 aa).

The first 31 residues, 1 to 31 (MNQKGTVRLKALVLICLPLFLIATPVPVAVT), serve as a signal peptide directing secretion. The Extracellular segment spans residues 48–253 (WANTLVSKVA…IALLILAYVG (206 aa)). 3 N-linked (GlcNAc...) asparagine glycosylation sites follow: Asn-60, Asn-134, and Asn-165. A helical transmembrane segment spans residues 254-274 (WKFQQNKKEEIKKQQKIKFDM). The Cytoplasmic portion of the chain corresponds to 275 to 744 (EKTDALEAGN…PSGTFGTFTT (470 aa)). The Protein kinase domain maps to 306 to 603 (ITDFQLISKG…FARVWNHIMS (298 aa)). ATP contacts are provided by residues 312–320 (ISKGRFGKV) and Lys-338. The active-site Proton acceptor is Asp-440. Disordered stretches follow at residues 605–686 (PDSS…PEPE) and 724–744 (AGAD…TFTT). Residues 620–639 (RGVDDVEQSEKPEGIEEMQH) show a composition bias toward basic and acidic residues. The segment covering 731 to 744 (STPTPSGTFGTFTT) has biased composition (low complexity).

Belongs to the protein kinase superfamily. TKL Ser/Thr protein kinase family. TGFB receptor subfamily. As to quaternary structure, may interact with daf-1 to regulate dauer larva development. Interacts with sma-10. As to expression, pharynx, intestine, hypodermis and body wall muscles in L1 through to adult stages. Also expressed in head neurons, ventral cord and tail neurons. Subset of head neurons show coexpression with daf-1 when dauer/nondauer decision is made.

The protein resides in the cell membrane. It catalyses the reaction L-threonyl-[receptor-protein] + ATP = O-phospho-L-threonyl-[receptor-protein] + ADP + H(+). The enzyme catalyses L-seryl-[receptor-protein] + ATP = O-phospho-L-seryl-[receptor-protein] + ADP + H(+). Involved in a TGF-beta pathway. May be a receptor for TGF-beta-like ligand daf-7. Controls the decision of whether or not larvae enter a developmentally arrested state, known as dauer, in response to environmental conditions. Regulates body size and male tail patterning. Involved in regulating entry into quiescence triggered by satiety. Involved in sensitivity to CO2 levels. In Caenorhabditis elegans, this protein is Cell surface receptor daf-4.